A 145-amino-acid polypeptide reads, in one-letter code: Probable 4-amino-4-deoxy-L-arabinose-phosphoundecaprenol flippase subunit ArnF (145 aa).

Topologically, residues 1–3 (MAH) are cytoplasmic. The helical transmembrane segment at 4–24 (LTLSIRGLLLALMSVLLISVA) threads the bilayer. Residues 25 to 61 (QLSMKWGMGTLNQLWSDLVMLWQGEDYSSLFSQALAP) lie on the Periplasmic side of the membrane. A helical membrane pass occupies residues 62–82 (VMAVGAGLFCYALSMACWVMA). The Cytoplasmic segment spans residues 83–89 (LKRLPLS). Residues 90 to 110 (IAYPLLSLSYVLVYLGAVYLP) traverse the membrane as a helical segment. Topologically, residues 111-114 (WLNE) are periplasmic. Residues 115–135 (PLSWVKGTGIFLILLGLIFVL) form a helical membrane-spanning segment. Residues 136–145 (PKKNQTSDKS) are Cytoplasmic-facing.

The protein belongs to the ArnF family. Heterodimer of ArnE and ArnF.

Its subcellular location is the cell inner membrane. It functions in the pathway bacterial outer membrane biogenesis; lipopolysaccharide biosynthesis. Translocates 4-amino-4-deoxy-L-arabinose-phosphoundecaprenol (alpha-L-Ara4N-phosphoundecaprenol) from the cytoplasmic to the periplasmic side of the inner membrane. This Shewanella sediminis (strain HAW-EB3) protein is Probable 4-amino-4-deoxy-L-arabinose-phosphoundecaprenol flippase subunit ArnF.